Consider the following 122-residue polypeptide: Large ribosomal subunit protein uL14 (122 aa).

This sequence belongs to the universal ribosomal protein uL14 family. As to quaternary structure, part of the 50S ribosomal subunit. Forms a cluster with proteins L3 and L19. In the 70S ribosome, L14 and L19 interact and together make contacts with the 16S rRNA in bridges B5 and B8.

Its function is as follows. Binds to 23S rRNA. Forms part of two intersubunit bridges in the 70S ribosome. The protein is Large ribosomal subunit protein uL14 of Shouchella clausii (strain KSM-K16) (Alkalihalobacillus clausii).